A 107-amino-acid polypeptide reads, in one-letter code: Putative septation protein SpoVG (107 aa).

Residues 82 to 107 are disordered; sequence ETDEVIPDKNAQPSSDSEDNGSEEEA. Residues 97–107 are compositionally biased toward acidic residues; that stretch reads DSEDNGSEEEA.

This sequence belongs to the SpoVG family.

In terms of biological role, could be involved in septation. The polypeptide is Putative septation protein SpoVG (Staphylococcus carnosus (strain TM300)).